The chain runs to 497 residues: Acetyl-coenzyme A carboxylase carboxyl transferase subunit beta, chloroplastic (497 aa).

Residues 30–50 form a disordered region; it reads GPVENTTVNEDPTRNDTDKNI. Residues 40 to 50 are compositionally biased toward basic and acidic residues; sequence DPTRNDTDKNI. A CoA carboxyltransferase N-terminal domain is found at 230–497; that stretch reads VQCECENCYG…FFPLNQNSIK (268 aa). 4 residues coordinate Zn(2+): Cys-232, Cys-237, Cys-253, and Cys-256. Residues 232 to 256 form a C4-type zinc finger; it reads CECENCYGVNYKKSLNSKMNICEQC.

It belongs to the AccD/PCCB family. As to quaternary structure, acetyl-CoA carboxylase is a heterohexamer composed of biotin carboxyl carrier protein, biotin carboxylase and 2 subunits each of ACCase subunit alpha and ACCase plastid-coded subunit beta (accD). Zn(2+) serves as cofactor.

It is found in the plastid. It localises to the chloroplast stroma. It catalyses the reaction N(6)-carboxybiotinyl-L-lysyl-[protein] + acetyl-CoA = N(6)-biotinyl-L-lysyl-[protein] + malonyl-CoA. It functions in the pathway lipid metabolism; malonyl-CoA biosynthesis; malonyl-CoA from acetyl-CoA: step 1/1. In terms of biological role, component of the acetyl coenzyme A carboxylase (ACC) complex. Biotin carboxylase (BC) catalyzes the carboxylation of biotin on its carrier protein (BCCP) and then the CO(2) group is transferred by the transcarboxylase to acetyl-CoA to form malonyl-CoA. In Gossypium hirsutum (Upland cotton), this protein is Acetyl-coenzyme A carboxylase carboxyl transferase subunit beta, chloroplastic.